Reading from the N-terminus, the 371-residue chain is Ferrochelatase (371 aa).

2 residues coordinate Fe cation: H218 and E299.

It belongs to the ferrochelatase family.

It localises to the cytoplasm. The enzyme catalyses heme b + 2 H(+) = protoporphyrin IX + Fe(2+). It functions in the pathway porphyrin-containing compound metabolism; protoheme biosynthesis; protoheme from protoporphyrin-IX: step 1/1. In terms of biological role, catalyzes the ferrous insertion into protoporphyrin IX. This chain is Ferrochelatase, found in Cupriavidus necator (strain ATCC 17699 / DSM 428 / KCTC 22496 / NCIMB 10442 / H16 / Stanier 337) (Ralstonia eutropha).